The sequence spans 711 residues: Arginine decarboxylase 2 (711 aa).

Lys-147 carries the post-translational modification N6-(pyridoxal phosphate)lysine. Residue 331 to 341 (IDIGGGLGIDY) coordinates substrate. Residues 642 to 661 (MHTKGGSEGENEEEEEDDEF) are disordered. The segment covering 650–661 (GENEEEEEDDEF) has biased composition (acidic residues).

This sequence belongs to the Orn/Lys/Arg decarboxylase class-II family. SpeA subfamily. In terms of assembly, homodimer and heterodimer with ADC1. It depends on pyridoxal 5'-phosphate as a cofactor. Mg(2+) is required as a cofactor.

The protein resides in the plastid. Its subcellular location is the chloroplast. The protein localises to the cytoplasm. It is found in the cytosol. It catalyses the reaction L-arginine + H(+) = agmatine + CO2. It functions in the pathway amine and polyamine biosynthesis; agmatine biosynthesis; agmatine from L-arginine: step 1/1. Required for the biosynthesis of putrescine. Catalyzes the first step of polyamine (PA) biosynthesis to produce putrescine from arginine. Is a major contributor to basal arginine decarboxylase (ADC) activity and putrescine biosynthesis. Accumulation of putrescine plays a positive role in salt stress tolerance. Accumulation of putrescine plays a positive role in freezing tolerance. Production of PA is essential for normal seed development. Controls PA homeostasis which is crucial for normal plant growth and development. The protein is Arginine decarboxylase 2 of Arabidopsis thaliana (Mouse-ear cress).